Here is a 436-residue protein sequence, read N- to C-terminus: GTPase Obg (436 aa).

An Obg domain is found at 2 to 160 (SMFLDTAKVS…RELALELKIL (159 aa)). Residues 161-338 (ADVGLVGFPS…LLDATAQLLA (178 aa)) form the OBG-type G domain. Residues 167–174 (GFPSVGKS), 192–196 (FTTIV), 214–217 (DLPG), 284–287 (NKMD), and 319–321 (SGI) contribute to the GTP site. The Mg(2+) site is built by serine 174 and threonine 194. The region spanning 358 to 436 (GFEEEEKAFD…IGKFEFEFVD (79 aa)) is the OCT domain.

This sequence belongs to the TRAFAC class OBG-HflX-like GTPase superfamily. OBG GTPase family. Monomer. Mg(2+) serves as cofactor.

Its subcellular location is the cytoplasm. In terms of biological role, an essential GTPase which binds GTP, GDP and possibly (p)ppGpp with moderate affinity, with high nucleotide exchange rates and a fairly low GTP hydrolysis rate. Plays a role in control of the cell cycle, stress response, ribosome biogenesis and in those bacteria that undergo differentiation, in morphogenesis control. In Streptococcus mutans serotype c (strain ATCC 700610 / UA159), this protein is GTPase Obg.